The following is a 905-amino-acid chain: uncharacterized protein (905 aa).

4 WD repeats span residues 42 to 82, 86 to 128, 136 to 175, and 177 to 217; these read RSLK…FQAV, GYAR…SDPK, STLD…DSVS, and VNTQ…SDNY. 2 positions are modified to phosphoserine: Ser394 and Ser397.

It belongs to the WD repeat mio family.

This is an uncharacterized protein from Schizosaccharomyces pombe (strain 972 / ATCC 24843) (Fission yeast).